Reading from the N-terminus, the 343-residue chain is 3-keto-steroid reductase (343 aa).

Residues Leu-19 and Thr-42 each coordinate NADP(+). Active-site proton donor residues include Ser-180 and Tyr-203. Residues Tyr-203, Lys-207, and Ser-239 each coordinate NADP(+). The active-site Lowers pKa of active site Tyr is Lys-207.

This sequence belongs to the short-chain dehydrogenases/reductases (SDR) family. ERG27 subfamily.

The enzyme catalyses a 3beta-hydroxysteroid + NADP(+) = a 3-oxosteroid + NADPH + H(+). It functions in the pathway steroid biosynthesis; zymosterol biosynthesis; zymosterol from lanosterol: step 5/6. Functionally, responsible for the reduction of the keto group on the C-3 of sterols. This is 3-keto-steroid reductase (ERG27) from Yarrowia lipolytica (strain CLIB 122 / E 150) (Yeast).